A 476-amino-acid polypeptide reads, in one-letter code: Serine/threonine-protein kinase sax-1 (476 aa).

The region spanning 87–381 (FESLKVIGRG…LDEIKQCPFV (295 aa)) is the Protein kinase domain. ATP contacts are provided by residues 93-101 (IGRGAFGEV) and lysine 116. Aspartate 210 (proton acceptor) is an active-site residue. An AGC-kinase C-terminal domain is found at 382–452 (KRIDWNHIRE…KRFDGLTQKM (71 aa)).

This sequence belongs to the protein kinase superfamily. AGC Ser/Thr protein kinase family. Mg(2+) is required as a cofactor. Widely expressed in embryonic and larval neurons that contribute axons to the nerve ring and in hypodermal cells, including lateral seam cells. Also displays a punctate localization in muscle.

It is found in the cytoplasm. The protein localises to the nucleus. The enzyme catalyses L-seryl-[protein] + ATP = O-phospho-L-seryl-[protein] + ADP + H(+). It catalyses the reaction L-threonyl-[protein] + ATP = O-phospho-L-threonyl-[protein] + ADP + H(+). Acts with sax-2 to restrict the growth of both primary and secondary neurites. Regulates mechanosensory tiling by controlling the termination point of sensory dendrites. The protein is Serine/threonine-protein kinase sax-1 of Caenorhabditis elegans.